A 794-amino-acid polypeptide reads, in one-letter code: Phenylalanine--tRNA ligase beta subunit (794 aa).

Residues 40–158 enclose the tRNA-binding domain; sequence NSLNSELILG…LKKYIGSDVK (119 aa). The B5 domain maps to 402–477; sequence KNKQSLEIKL…RLYSYDKIDE (76 aa). Positions 455, 461, 464, and 465 each coordinate Mg(2+). The region spanning 702 to 794 is the FDX-ACB domain; sequence SKFQSSSRDL…NIKQMKVVIR (93 aa).

Belongs to the phenylalanyl-tRNA synthetase beta subunit family. Type 1 subfamily. As to quaternary structure, tetramer of two alpha and two beta subunits. Mg(2+) is required as a cofactor.

The protein resides in the cytoplasm. The enzyme catalyses tRNA(Phe) + L-phenylalanine + ATP = L-phenylalanyl-tRNA(Phe) + AMP + diphosphate + H(+). The polypeptide is Phenylalanine--tRNA ligase beta subunit (Mycoplasma mycoides subsp. mycoides SC (strain CCUG 32753 / NCTC 10114 / PG1)).